We begin with the raw amino-acid sequence, 510 residues long: NAD(P)H-quinone oxidoreductase subunit 2, chloroplastic (510 aa).

13 helical membrane passes run 24 to 44 (LLLF…GLIL), 59 to 79 (WFYF…LFRW), 99 to 119 (IFQF…VEYI), 124 to 144 (MAIT…MFLC), 149 to 169 (LITI…LSGY), 183 to 203 (YLLM…WLYG), 229 to 249 (ISIA…PAPF), 295 to 315 (WHLL…LIAI), 323 to 343 (MLAY…IVGD), 354 to 374 (YMLF…SFGL), 395 to 415 (ALSL…AGFF), 418 to 438 (LYLF…MGLL), and 484 to 504 (MTVC…ILAI).

It belongs to the complex I subunit 2 family. As to quaternary structure, NDH is composed of at least 16 different subunits, 5 of which are encoded in the nucleus.

It is found in the plastid. It localises to the chloroplast thylakoid membrane. It catalyses the reaction a plastoquinone + NADH + (n+1) H(+)(in) = a plastoquinol + NAD(+) + n H(+)(out). It carries out the reaction a plastoquinone + NADPH + (n+1) H(+)(in) = a plastoquinol + NADP(+) + n H(+)(out). Functionally, NDH shuttles electrons from NAD(P)H:plastoquinone, via FMN and iron-sulfur (Fe-S) centers, to quinones in the photosynthetic chain and possibly in a chloroplast respiratory chain. The immediate electron acceptor for the enzyme in this species is believed to be plastoquinone. Couples the redox reaction to proton translocation, and thus conserves the redox energy in a proton gradient. This Sisyrinchium montanum (Strict blue-eyed grass) protein is NAD(P)H-quinone oxidoreductase subunit 2, chloroplastic.